We begin with the raw amino-acid sequence, 110 residues long: MSINKILSAADITKALGEFKGADSFDHKKFFHMIGLKKKNAKDVEAVFYILDKDKSGFIEEDELKSVLKCFAPEGRDLSEKETKDLLTAGDEDGDGKIGVSEFIQLVANS.

2 EF-hand domains span residues 39-74 (KNAK…FAPE) and 78-110 (LSEK…VANS). Ca(2+) is bound by residues Asp-52, Asp-54, Ser-56, Phe-58, Glu-60, Glu-63, Asp-91, Asp-93, Asp-95, Lys-97, and Glu-102.

It belongs to the parvalbumin family.

In terms of biological role, in muscle, parvalbumin is thought to be involved in relaxation after contraction. It binds two calcium ions. This is Parvalbumin alpha from Callorhinchus milii (Ghost shark).